A 515-amino-acid polypeptide reads, in one-letter code: MDLSDFHISTPLRYFHEEASLLWKLGVFAVLVYFLLPKPTYKTNVKVPTVKYMGPWMPEILSRIFFNSHAPTVIYKGYEKFKTSAFKVVKPDGDLVVLSTRYAEELRQMPSTTLNALEATFTDHVGGYTTILTDSHLHTETIQKKLTPAIGRLIPRMISELDHAFEVEFPTCDDQFASINPYTVFLRLVARVGARIFIGDELCREEKWLQASIDYTKNIFLTIALMRPMPGFLHPIVGRILPSSRSLKDQLSYIQQDLLGPVIKERRRLEASSDSEYKKPDDFLQWMMDLAQNENESHPDNLSHRLLGITSMAVVHTSAMSMTHILYDLLTMPDLIEPLRDEIRNEIKDWNKATQADLSRLIIMDSFLKESQRLNPPGDLSFHRVVKKDLTLSDGLFLPKGTHICMAAGPISKDPDVVSDPDTFDAFRFVKQRTATSGFVSTGPNNMHFGLGRYACPGRFFAAFVIKLILSRFLMDYDFKFETEHKERPKNLLIGDKIVPNVATPILIKRRATKA.

The chain crosses the membrane as a helical span at residues 20-36; sequence SLLWKLGVFAVLVYFLL. Position 456 (Cys-456) interacts with heme.

This sequence belongs to the cytochrome P450 family. Heme is required as a cofactor.

It is found in the membrane. It participates in secondary metabolite biosynthesis. Cytochrome P450 monooxygenase; part of the ATM2 gene cluster that mediates the biosynthesis of paxilline, a mycotoxin that acts as an inhibitor of mammalian maxi-K channels. PaxG, the geranylgeranyl diphosphate (GGPP) synthase is proposed to catalyze the first step in paxilline biosynthesis. Condensation of indole-3-glycerol phosphate with GGPP by paxC then forms 3-geranylgeranylindole (3-GGI), followed by epoxidation and cyclization of this intermediate (by paxM and paxB) to form paspaline. Paspaline is subsequently converted to 13-desoxypaxilline by paxP, the latter being then converted to paxilline by paxQ. Finally paxilline can be mono- and di-prenylated by paxD. PaxP can also utilized beta-paxitriol and alpha-PC-M6 as substrates converting them to paxilline. The protein is Cytochrome P450 monooxygenase paxP of Penicillium paxilli.